The following is a 268-amino-acid chain: Nickel import ATP-binding protein NikE (268 aa).

Positions 4 to 252 constitute an ABC transporter domain; sequence LNVSGLSHHY…SSDAGRVLQN (249 aa). 45–52 is an ATP binding site; that stretch reads GRSGCGKS.

Belongs to the ABC transporter superfamily. Nickel importer (TC 3.A.1.5.3) family. As to quaternary structure, the complex is composed of two ATP-binding proteins (NikD and NikE), two transmembrane proteins (NikB and NikC) and a solute-binding protein (NikA).

It is found in the cell inner membrane. The enzyme catalyses Ni(2+)(out) + ATP + H2O = Ni(2+)(in) + ADP + phosphate + H(+). Functionally, part of the ABC transporter complex NikABCDE involved in nickel import. Responsible for energy coupling to the transport system. The sequence is that of Nickel import ATP-binding protein NikE from Shigella sonnei (strain Ss046).